Consider the following 670-residue polypeptide: Probable potassium transport system protein Kup (670 aa).

A disordered region spans residues 1-42 (MSQIPSPNDPPPAGAVPTSGAPAGPSATPAPSPTAGFSLPEH). A compositionally biased stretch (low complexity) spans 15–35 (AVPTSGAPAGPSATPAPSPTA). The next 12 helical transmembrane spans lie at 51–71 (LAALAVGALGVVYGDIGTSPL), 91–111 (VLGVLSLVFWAMTFVVTFKYM), 144–164 (VLLMLGLFGAALLYGDGIITP), 180–200 (PAMERVVVPATVVILVFLFLF), 208–228 (VGAVFGPIMLVWFATIAVLGV), 254–274 (GWHGFLVLGGVVLVITGGEAL), 290–310 (WLGLAMPALLLNYLGQGALLL), 322–342 (LLAPEWALYPTIAIATAAAIV), 380–400 (IYLPEVNWMLGTACVALVLGF), 406–426 (LASAYGIAVTGTMIVTTLLFH), 440–460 (AWPLTVLFLTVDASFFLANVV), and 464–484 (DGGWFPIAAAALVFTLMSTWK).

Belongs to the HAK/KUP transporter (TC 2.A.72) family.

It localises to the cell inner membrane. The catalysed reaction is K(+)(in) + H(+)(in) = K(+)(out) + H(+)(out). Functionally, transport of potassium into the cell. Likely operates as a K(+):H(+) symporter. In Anaeromyxobacter dehalogenans (strain 2CP-C), this protein is Probable potassium transport system protein Kup.